We begin with the raw amino-acid sequence, 877 residues long: AP-5 complex subunit beta-1 (877 aa).

As to quaternary structure, probably part of the adaptor protein complex 5 (AP-5), a tetramer composed of AP5B1, AP5M1, AP5S1 and AP5Z1. Interacts with ZFYVE26 and SPG11.

Its function is as follows. As part of AP-5, a probable fifth adaptor protein complex, it may be involved in endosomal transport. The polypeptide is AP-5 complex subunit beta-1 (AP5B1) (Bos taurus (Bovine)).